Here is a 337-residue protein sequence, read N- to C-terminus: Ornithine carbamoyltransferase, catabolic (337 aa).

Carbamoyl phosphate is bound by residues 57–60 (STRT), Q84, R108, and 135–138 (HPTQ). Residues N167, D231, and 235–236 (SM) each bind L-ornithine. Carbamoyl phosphate-binding positions include 272–273 (CL) and R317.

The protein belongs to the aspartate/ornithine carbamoyltransferase superfamily. OTCase family.

The protein localises to the cytoplasm. It carries out the reaction carbamoyl phosphate + L-ornithine = L-citrulline + phosphate + H(+). Its pathway is amino-acid degradation; L-arginine degradation via ADI pathway; carbamoyl phosphate from L-arginine: step 2/2. Its function is as follows. Reversibly catalyzes the transfer of the carbamoyl group from carbamoyl phosphate (CP) to the N(epsilon) atom of ornithine (ORN) to produce L-citrulline. The protein is Ornithine carbamoyltransferase, catabolic (arcB) of Streptococcus agalactiae.